A 434-amino-acid polypeptide reads, in one-letter code: GTPase Obg (434 aa).

One can recognise an Obg domain in the interval 1-158 (MFLDTAKIKV…RELQLELKIL (158 aa)). The OBG-type G domain maps to 159–336 (ADVGLVGFPS…LLDATAELLD (178 aa)). GTP contacts are provided by residues 165-172 (GFPSVGKS), 190-194 (FTTIV), 212-215 (DLPG), 282-285 (NKMD), and 317-319 (SGL). Positions 172 and 192 each coordinate Mg(2+). One can recognise an OCT domain in the interval 356–434 (GFDEEEKAFE…IGKFEFEFVD (79 aa)).

Belongs to the TRAFAC class OBG-HflX-like GTPase superfamily. OBG GTPase family. In terms of assembly, monomer. The cofactor is Mg(2+).

The protein localises to the cytoplasm. An essential GTPase which binds GTP, GDP and possibly (p)ppGpp with moderate affinity, with high nucleotide exchange rates and a fairly low GTP hydrolysis rate. Plays a role in control of the cell cycle, stress response, ribosome biogenesis and in those bacteria that undergo differentiation, in morphogenesis control. This chain is GTPase Obg, found in Streptococcus pneumoniae serotype 19F (strain G54).